The following is a 1192-amino-acid chain: Chromosome partition protein Smc (1192 aa).

31–38 (PNGSGKSN) provides a ligand contact to ATP. Coiled-coil stretches lie at residues 164–197 (AGISRFKAKKVEAERRLERVQTNLTRLGDIVDEV), 234–292 (LTLS…RSEL), 333–369 (SAIADLRKTIAALEVAEAELADVQQKKESIAAKRDVE), and 396–464 (EHEA…DAKV). Positions 522-636 (KDLVGIVADC…LVDTLATAIG (115 aa)) constitute an SMC hinge domain. Coiled-coil stretches lie at residues 676–736 (RSEL…AKLH), 772–902 (ELAV…EREA), and 986–1030 (GSVN…INAD).

This sequence belongs to the SMC family. As to quaternary structure, homodimer.

The protein localises to the cytoplasm. Functionally, required for chromosome condensation and partitioning. In Rhodopirellula baltica (strain DSM 10527 / NCIMB 13988 / SH1), this protein is Chromosome partition protein Smc.